The primary structure comprises 356 residues: Protein MGF 360-3L (356 aa).

The stretch at Lys61–Leu93 is one ANK repeat.

The protein belongs to the asfivirus MGF 360 family.

In terms of biological role, plays a role in virus cell tropism, and may be required for efficient virus replication in macrophages. The sequence is that of Protein MGF 360-3L from Ornithodoros (relapsing fever ticks).